The following is a 400-amino-acid chain: Keratin, type I cytoskeletal 19 (400 aa).

Residues 1–79 (MTSYSYRQSS…TASDGLLAGN (79 aa)) are head. Residue R7 is modified to Omega-N-methylarginine. Phosphoserine occurs at positions 14 and 22. R24 bears the Asymmetric dimethylarginine; alternate mark. Position 24 is an omega-N-methylarginine; alternate (R24). R32 carries the omega-N-methylarginine modification. Residues S35 and S40 each carry the phosphoserine modification. Residues R43 and R51 each carry the omega-N-methylarginine modification. 2 positions are modified to phosphoserine: S57 and S72. A coil 1A region spans residues 80 to 115 (EKLTMQNLNDRLASYLDKVRALEAANGELEVKIRDW). In terms of domain architecture, IF rod spans 80–391 (EKLTMQNLND…SLLEGQEDHY (312 aa)). A linker 1 region spans residues 116 to 133 (YQKQGPGPSRDYSHYYTT). Residues 134–225 (IQDLRDKILG…KNHEEEISTL (92 aa)) are coil 1B. The interval 226–248 (RGQVGGQVSVEVDSAPGTDLAKI) is linker 12. The segment at 244-390 (DLAKILSDMR…RSLLEGQEDH (147 aa)) is necessary for interaction with PNN. The interval 249 to 387 (LSDMRSQYEV…ATYRSLLEGQ (139 aa)) is coil 2. T323 bears the Phosphothreonine mark. The segment at 388–400 (EDHYNNLSASKVL) is rod-like helical tail. Residue Y391 is modified to Phosphotyrosine. 2 positions are modified to phosphoserine: S395 and S397.

This sequence belongs to the intermediate filament family. As to quaternary structure, heterotetramer of two type I and two type II keratins. Interacts with PNN and the actin-binding domain of DMD. Interacts with HCV core protein. In terms of assembly, (Microbial infection) Interacts with hepatitis C virus/HCV core protein. Expressed in a defined zone of basal keratinocytes in the deep outer root sheath of hair follicles. Also observed in sweat gland and mammary gland ductal and secretory cells, bile ducts, gastrointestinal tract, bladder urothelium, oral epithelia, esophagus, ectocervical epithelium (at protein level). Expressed in epidermal basal cells, in nipple epidermis and a defined region of the hair follicle. Also seen in a subset of vascular wall cells in both the veins and artery of human umbilical cord, and in umbilical cord vascular smooth muscle. Observed in muscle fibers accumulating in the costameres of myoplasm at the sarcolemma in structures that contain dystrophin and spectrin.

In terms of biological role, involved in the organization of myofibers. Together with KRT8, helps to link the contractile apparatus to dystrophin at the costameres of striated muscle. This chain is Keratin, type I cytoskeletal 19 (KRT19), found in Homo sapiens (Human).